We begin with the raw amino-acid sequence, 327 residues long: 2-methoxy-6-polyprenyl-1,4-benzoquinol methylase, mitochondrial (327 aa).

The transit peptide at 1–42 (MAAPGSCALWSYCGRGWSRAMRGCQLLGLRSSWPGDLLSARL) directs the protein to the mitochondrion. S-adenosyl-L-methionine-binding positions include threonine 117, aspartate 171, and 199–200 (DA).

Belongs to the class I-like SAM-binding methyltransferase superfamily. MenG/UbiE family. In terms of assembly, component of a multi-subunit COQ enzyme complex, composed of at least COQ3, COQ4, COQ5, COQ6, COQ7 and COQ9. Interacts with PYURF; the interaction is direct, stabilizes COQ5 protein and associates PYURF with COQ enzyme complex. As to expression, widely expressed, with highest levels in liver, lung, placenta and skeletal muscle.

The protein resides in the mitochondrion inner membrane. The catalysed reaction is 2-methoxy-6-(all-trans-decaprenyl)benzene-1,4-diol + S-adenosyl-L-methionine = 5-methoxy-2-methyl-3-(all-trans-decaprenyl)benzene-1,4-diol + S-adenosyl-L-homocysteine + H(+). Its pathway is cofactor biosynthesis; ubiquinone biosynthesis. Its function is as follows. Methyltransferase required for the conversion of 2-decaprenyl-6-methoxy-1,4-benzoquinol (DDMQH2) to 2-decaprenyl-3-methyl-6-methoxy-1,4-benzoquinol (DMQH2). This chain is 2-methoxy-6-polyprenyl-1,4-benzoquinol methylase, mitochondrial, found in Homo sapiens (Human).